Here is a 326-residue protein sequence, read N- to C-terminus: Aspartate carbamoyltransferase catalytic subunit (326 aa).

Residues Arg58 and Thr59 each contribute to the carbamoyl phosphate site. Lys86 provides a ligand contact to L-aspartate. Residues Arg108, His141, and Gln144 each coordinate carbamoyl phosphate. Positions 181 and 239 each coordinate L-aspartate. Gly280 and Pro281 together coordinate carbamoyl phosphate.

It belongs to the aspartate/ornithine carbamoyltransferase superfamily. ATCase family. In terms of assembly, heterododecamer (2C3:3R2) of six catalytic PyrB chains organized as two trimers (C3), and six regulatory PyrI chains organized as three dimers (R2).

The enzyme catalyses carbamoyl phosphate + L-aspartate = N-carbamoyl-L-aspartate + phosphate + H(+). It functions in the pathway pyrimidine metabolism; UMP biosynthesis via de novo pathway; (S)-dihydroorotate from bicarbonate: step 2/3. In terms of biological role, catalyzes the condensation of carbamoyl phosphate and aspartate to form carbamoyl aspartate and inorganic phosphate, the committed step in the de novo pyrimidine nucleotide biosynthesis pathway. The chain is Aspartate carbamoyltransferase catalytic subunit from Synechococcus sp. (strain JA-3-3Ab) (Cyanobacteria bacterium Yellowstone A-Prime).